Reading from the N-terminus, the 515-residue chain is MRKISVFDTTLRDGEQSAGVNLNFEEKMEIAKQLERLGVDIIEAGFPASSQGDFQSVKAIAETVKGSSVTGLARSVQKDIDAAWEALKSAEEPRIHLFIATSPIHMEHKLRMTPEQVIEKAVESVKYAASRFKHVQWSAEDASRSDFPFLAQIIEAVIQAGATVINLPDTVGYTTPQEIKRMFQYMKQNVPSIDKVSLSTHNHDDLGMAVANSLAAIQGGADQVECTINGIGERAGNASLEEIAVALNIRKDHYETETGLILKEIKRTSSLVSKLTGMVVPNNKAVVGANAFAHESGIHQDGVLKNKQTYEIITPEMVGVSSNSMVLGKHSGRHAFKTKVQELGFTGTDEQLNNIFKAFKDLADKKKEITEDDLFALMTEQTVGGETNHYELQTLQVNYGSNLTNTATITMKLPSGEVAEEAATGSGSVEAIYNTLERLLDAPVKLLDYRIQSITGGRDALADVYVQMDYQGVVSSGRGTAHDVLEASAKAYLNAVNRTINRKKYAEVYGSKVEV.

A Pyruvate carboxyltransferase domain is found at 4–266 (ISVFDTTLRD…ETGLILKEIK (263 aa)). Residues Asp-13, His-201, His-203, and Asn-237 each contribute to the Mn(2+) site. The segment at 391 to 515 (ELQTLQVNYG…AEVYGSKVEV (125 aa)) is regulatory domain.

Belongs to the alpha-IPM synthase/homocitrate synthase family. LeuA type 1 subfamily. Homodimer. Requires Mn(2+) as cofactor.

The protein resides in the cytoplasm. It carries out the reaction 3-methyl-2-oxobutanoate + acetyl-CoA + H2O = (2S)-2-isopropylmalate + CoA + H(+). It functions in the pathway amino-acid biosynthesis; L-leucine biosynthesis; L-leucine from 3-methyl-2-oxobutanoate: step 1/4. Catalyzes the condensation of the acetyl group of acetyl-CoA with 3-methyl-2-oxobutanoate (2-ketoisovalerate) to form 3-carboxy-3-hydroxy-4-methylpentanoate (2-isopropylmalate). This is 2-isopropylmalate synthase from Halalkalibacterium halodurans (strain ATCC BAA-125 / DSM 18197 / FERM 7344 / JCM 9153 / C-125) (Bacillus halodurans).